Consider the following 344-residue polypeptide: GTP 3',8-cyclase (344 aa).

The Radical SAM core domain occupies 19–245 (PFGRAVTYLR…DIPYRTGGPA (227 aa)). A GTP-binding site is contributed by Arg28. Residues Cys35 and Cys39 each contribute to the [4Fe-4S] cluster site. Tyr41 is a binding site for S-adenosyl-L-methionine. Cys42 contacts [4Fe-4S] cluster. Arg77 is a GTP binding site. Position 81 (Gly81) interacts with S-adenosyl-L-methionine. Thr111 provides a ligand contact to GTP. Ser135 contacts S-adenosyl-L-methionine. A GTP-binding site is contributed by Lys171. Met205 lines the S-adenosyl-L-methionine pocket. The [4Fe-4S] cluster site is built by Cys268 and Cys271. 273–275 (RVR) serves as a coordination point for GTP. [4Fe-4S] cluster is bound at residue Cys285.

It belongs to the radical SAM superfamily. MoaA family. In terms of assembly, monomer and homodimer. The cofactor is [4Fe-4S] cluster.

The catalysed reaction is GTP + AH2 + S-adenosyl-L-methionine = (8S)-3',8-cyclo-7,8-dihydroguanosine 5'-triphosphate + 5'-deoxyadenosine + L-methionine + A + H(+). It functions in the pathway cofactor biosynthesis; molybdopterin biosynthesis. Its function is as follows. Catalyzes the cyclization of GTP to (8S)-3',8-cyclo-7,8-dihydroguanosine 5'-triphosphate. The sequence is that of GTP 3',8-cyclase from Brucella canis (strain ATCC 23365 / NCTC 10854 / RM-666).